We begin with the raw amino-acid sequence, 212 residues long: Uracil phosphoribosyltransferase (212 aa).

5-phospho-alpha-D-ribose 1-diphosphate contacts are provided by residues R78, R103, and 130–138 (DPMLATGSS). Uracil contacts are provided by residues I193 and 198–200 (GDA). D199 serves as a coordination point for 5-phospho-alpha-D-ribose 1-diphosphate.

This sequence belongs to the UPRTase family. It depends on Mg(2+) as a cofactor.

The catalysed reaction is UMP + diphosphate = 5-phospho-alpha-D-ribose 1-diphosphate + uracil. It functions in the pathway pyrimidine metabolism; UMP biosynthesis via salvage pathway; UMP from uracil: step 1/1. With respect to regulation, allosterically activated by GTP. Its function is as follows. Catalyzes the conversion of uracil and 5-phospho-alpha-D-ribose 1-diphosphate (PRPP) to UMP and diphosphate. This Pseudomonas fluorescens (strain Pf0-1) protein is Uracil phosphoribosyltransferase.